Reading from the N-terminus, the 260-residue chain is 3'-5' ssDNA/RNA exonuclease TatD (260 aa).

Residues glutamate 92, histidine 128, and histidine 153 each contribute to the a divalent metal cation site.

The protein belongs to the metallo-dependent hydrolases superfamily. TatD-type hydrolase family. TatD subfamily. In terms of assembly, monomer. Requires Mg(2+) as cofactor.

It is found in the cytoplasm. 3'-5' exonuclease that prefers single-stranded DNA and RNA. May play a role in the H(2)O(2)-induced DNA damage repair. This Pantoea vagans (strain C9-1) (Pantoea agglomerans (strain C9-1)) protein is 3'-5' ssDNA/RNA exonuclease TatD.